The chain runs to 310 residues: Olfactory receptor 8I2 (310 aa).

Residues 1–25 (MAGNNFTEVTVFILSGFANHPELQV) lie on the Extracellular side of the membrane. Asn-5 carries an N-linked (GlcNAc...) asparagine glycan. Residues 26-46 (SLFLMFLFIYLFTVLGNLGLI) form a helical membrane-spanning segment. Over 47-54 (TLIRMDSQ) the chain is Cytoplasmic. The chain crosses the membrane as a helical span at residues 55 to 75 (LHTPMYFFLSNLAFIDIFYSS). Residues 76 to 99 (TVTPKALVNFQSNRRSISFVGCFV) lie on the Extracellular side of the membrane. A disulfide bridge links Cys-97 with Cys-188. Residues 100–120 (QMYFFVGLVCCECFLLGSMAY) traverse the membrane as a helical segment. Residues 121–139 (NRYIAICNPLLYSVVMSQK) are Cytoplasmic-facing. Residues 140–160 (VSNWLGVMPYVIGFTSSLISV) form a helical membrane-spanning segment. Over 161 to 196 (WVISSLAFCDSSINHFFCDTTALLALSCVDTFGTEM) the chain is Extracellular. Residues 197-216 (VSFVLAGFTLLSSLLIITVT) form a helical membrane-spanning segment. Topologically, residues 217–236 (YIIIISAILRIQSAAGRQKA) are cytoplasmic. Residues 237–257 (FSTCASHLMAVTIFYGSLIFT) traverse the membrane as a helical segment. Residues 258–270 (YLQPDNTSSLTQA) lie on the Extracellular side of the membrane. A helical membrane pass occupies residues 271 to 291 (QVASVFYTIVIPMLNPLIYSL). The Cytoplasmic segment spans residues 292–310 (RNKDVKNALLRVIHRKLFP).

Belongs to the G-protein coupled receptor 1 family.

The protein resides in the cell membrane. Odorant receptor. In Homo sapiens (Human), this protein is Olfactory receptor 8I2 (OR8I2).